A 119-amino-acid polypeptide reads, in one-letter code: Large ribosomal subunit protein uL18 (119 aa).

It belongs to the universal ribosomal protein uL18 family. Part of the 50S ribosomal subunit; part of the 5S rRNA/L5/L18/L25 subcomplex. Contacts the 5S and 23S rRNAs.

In terms of biological role, this is one of the proteins that bind and probably mediate the attachment of the 5S RNA into the large ribosomal subunit, where it forms part of the central protuberance. This is Large ribosomal subunit protein uL18 from Lactobacillus delbrueckii subsp. bulgaricus (strain ATCC 11842 / DSM 20081 / BCRC 10696 / JCM 1002 / NBRC 13953 / NCIMB 11778 / NCTC 12712 / WDCM 00102 / Lb 14).